The chain runs to 239 residues: Cysteine-rich venom protein natrin-1 (239 aa).

Positions 1 to 18 are cleaved as a signal peptide; it reads MIAFSLLCFAAVLQQSFG. The SCP domain occupies 37–165; that stretch reads VDLHNSLRRR…AWSYFYVCQY (129 aa). Intrachain disulfides connect Cys74-Cys152, Cys91-Cys166, Cys147-Cys163, Cys185-Cys192, Cys188-Cys197, Cys201-Cys234, Cys210-Cys228, and Cys219-Cys232. The 34-residue stretch at 201-234 folds into the ShKT domain; the sequence is CTIYNKLTNCDSLLKQSSCQDDWIKSNCPASCFC.

Expressed by the venom gland.

The protein resides in the secreted. Functionally, inhibits calcium-activated potassium channels (KCa1.1/KCNMA1), voltage-gated potassium channel Kv1.3/KCNA3, and the calcium release channel/ryanodine receptor (RyR). Binds specifically to type 1 RyR (RyR1) from skeletal muscle. Inhibit both the binding of ryanodine to RyR1, and RyR1's calcium-channel activity. Inhibits carbachol-induced muscle contraction and weakly blocks muscle contraction evoked by potassium. This is Cysteine-rich venom protein natrin-1 from Naja atra (Chinese cobra).